The primary structure comprises 717 residues: Radial spoke head protein 6 homolog A (717 aa).

Disordered regions lie at residues 1-65, 503-523, 563-588, and 672-717; these read MGDL…SLSQ, SEEEGDEEEEGGAGRDSYEEN, TEEEEDLGEEEEKADEGPEEVEQEVG, and GPEI…ETDD. Composition is skewed to acidic residues over residues 503-513, 564-585, and 700-717; these read SEEEGDEEEEG, EEEEDLGEEEEKADEGPEEVEQ, and TEEEEEGEEEEEGEETDD.

The protein belongs to the flagellar radial spoke RSP4/6 family. Component of the axonemal radial spoke 1 (RS1) and 2 (RS2) complexes, at least composed of spoke head proteins RSPH1, RSPH3, RSPH9 and the cilia-specific component RSPH4A or sperm-specific component RSPH6A, spoke stalk proteins RSPH14, DNAJB13, DYDC1, ROPN1L and NME5, and the RS1 complex-specific anchor protein IQUB. Interacts with RSPH1. Interacts with RSPH3B. Interacts with RSPH4A. Interacts with RSPH9. Interacts with RSPH10B. Phosphorylated by PKA. Phosphorylation increases in capacitated sperm.

It is found in the cytoplasm. The protein resides in the cytoskeleton. It localises to the flagellum axoneme. Functions as part of radial spoke complexes in the axoneme of sperm flagella that play an important part in motility. The triple radial spokes (RS1, RS2 and RS3) are required to modulate beating of the sperm flagellum. In Homo sapiens (Human), this protein is Radial spoke head protein 6 homolog A.